Consider the following 245-residue polypeptide: 1-(5-phosphoribosyl)-5-[(5-phosphoribosylamino)methylideneamino] imidazole-4-carboxamide isomerase (245 aa).

The Proton acceptor role is filled by aspartate 7. Aspartate 129 (proton donor) is an active-site residue.

Belongs to the HisA/HisF family.

It localises to the cytoplasm. The catalysed reaction is 1-(5-phospho-beta-D-ribosyl)-5-[(5-phospho-beta-D-ribosylamino)methylideneamino]imidazole-4-carboxamide = 5-[(5-phospho-1-deoxy-D-ribulos-1-ylimino)methylamino]-1-(5-phospho-beta-D-ribosyl)imidazole-4-carboxamide. It participates in amino-acid biosynthesis; L-histidine biosynthesis; L-histidine from 5-phospho-alpha-D-ribose 1-diphosphate: step 4/9. This chain is 1-(5-phosphoribosyl)-5-[(5-phosphoribosylamino)methylideneamino] imidazole-4-carboxamide isomerase, found in Shewanella baltica (strain OS223).